The primary structure comprises 416 residues: Serine/threonine-protein phosphatase PP2A-like PPG1 (416 aa).

Mn(2+) is bound by residues Asp62, His64, Asp90, and Asn122. Residue His123 is the Proton donor of the active site. 2 residues coordinate Mn(2+): His173 and His248. The interval 363-391 (EDTLQGKSVNGINFDDELSTSDDTSGSGG) is disordered.

It belongs to the PPP phosphatase family. PP-2A subfamily. Requires Mn(2+) as cofactor.

The catalysed reaction is O-phospho-L-seryl-[protein] + H2O = L-seryl-[protein] + phosphate. The enzyme catalyses O-phospho-L-threonyl-[protein] + H2O = L-threonyl-[protein] + phosphate. With respect to regulation, inhibited by okadaic acid, a specific inhibitor of serine/threonine phosphatases of types 1, 2A and 2B. Its function is as follows. Serine/threonine-protein phosphatase that plays an important role in controlling colony morphology, filament extension and agar invasion. Down-regulates expression of NRG1 and affects the expression of multiple filament-specific transcripts in response to serum and 37 degrees Celsius. Plays a crucial role in virulence in a mouse model of systemic candidiasis. This is Serine/threonine-protein phosphatase PP2A-like PPG1 from Candida albicans (strain SC5314 / ATCC MYA-2876) (Yeast).